Reading from the N-terminus, the 205-residue chain is MANTLFDRTIAFAGICQAASLVQKMAKDGHCDQEAFDTAIQSILETNPSNTVAVYGKESNLRIGLECLVRDFDNTPSGSELTRYLISLMALERKLAGHRDGMSKLGERIGTIERQLEHFDIHDEQMLSNIASIYLDVISPMGPRIQVTGTPSVLQQPMTQHKVRALLLSGIRSAVLWRQVGGKRRHLIFGRKKMVEQAKIILARI.

Belongs to the HflD family.

The protein resides in the cytoplasm. It is found in the cell inner membrane. The protein is High frequency lysogenization protein HflD homolog of Aliivibrio fischeri (strain MJ11) (Vibrio fischeri).